Consider the following 325-residue polypeptide: Phosphate import ATP-binding protein PstB (325 aa).

The region spanning 79–320 (IDNYNLWYSN…PNNEKTKDYI (242 aa)) is the ABC transporter domain. 111-118 (GPSGCGKS) serves as a coordination point for ATP.

The protein belongs to the ABC transporter superfamily. Phosphate importer (TC 3.A.1.7) family. As to quaternary structure, the complex is composed of two ATP-binding proteins (PstB), two transmembrane proteins (PstC and PstA) and a solute-binding protein (PstS).

The protein resides in the cell membrane. The catalysed reaction is phosphate(out) + ATP + H2O = ADP + 2 phosphate(in) + H(+). Part of the ABC transporter complex PstSACB involved in phosphate import. Responsible for energy coupling to the transport system. This chain is Phosphate import ATP-binding protein PstB, found in Mycoplasmoides gallisepticum (strain R(low / passage 15 / clone 2)) (Mycoplasma gallisepticum).